A 215-amino-acid chain; its full sequence is Ribonuclease T (215 aa).

In terms of domain architecture, Exonuclease spans 20 to 194 (VVIDVETAGF…YDTERTAVLF (175 aa)). 4 residues coordinate Mg(2+): aspartate 23, glutamate 25, histidine 181, and aspartate 186. Histidine 181 acts as the Proton donor/acceptor in catalysis.

It belongs to the RNase T family. Homodimer. Mg(2+) serves as cofactor.

In terms of biological role, trims short 3' overhangs of a variety of RNA species, leaving a one or two nucleotide 3' overhang. Responsible for the end-turnover of tRNA: specifically removes the terminal AMP residue from uncharged tRNA (tRNA-C-C-A). Also appears to be involved in tRNA biosynthesis. This chain is Ribonuclease T, found in Shigella boydii serotype 4 (strain Sb227).